A 126-amino-acid chain; its full sequence is Small ribosomal subunit protein eS8 (126 aa).

Residues 1–10 are compositionally biased toward polar residues; it reads MAIWQGSSLR. The interval 1 to 35 is disordered; sequence MAIWQGSSLRKPSGARSRRNKNKRNAEFGRNPAET.

The protein belongs to the eukaryotic ribosomal protein eS8 family. Part of the 30S ribosomal subunit.

This chain is Small ribosomal subunit protein eS8, found in Methanosphaera stadtmanae (strain ATCC 43021 / DSM 3091 / JCM 11832 / MCB-3).